Here is a 222-residue protein sequence, read N- to C-terminus: uncharacterized protein (222 aa).

An N-terminal signal peptide occupies residues Met1–Gly20. The N-palmitoyl cysteine moiety is linked to residue Cys21. Cys21 carries the S-diacylglycerol cysteine lipid modification.

It localises to the cell membrane. This is an uncharacterized protein from Escherichia coli O157:H7.